Consider the following 499-residue polypeptide: MSSGANGNSKSLAYDIKFTKLFINGEFVDSISGSTFETIDPATEEVLATVAEGREEDVDLAVKAAREAFDNGPWPRLSGEARRKILLKFADLIEENADEIATLEVIDTGKPFQIARYVENSWTSETFRYFAGAADKIRGATLKMSSDFQAYTLREPIGVVGHIIPWNAPAYLFAMKVAPALAAGCTVVIKPAENTPLVGLFMAYLSKLAGVPDGVINVVNGFGSTAGAAVSSHMDIDAVTFTGSTKVGRTIMQAAAASNLKPVSLELGGKSPFIVFDDADIEKAAEIAVLGVLSNKGELCVAGSRVFVHEGIYDAFVKKLEATVKNWATGDRFDAATRHGPQNNKQQYEKVLSYIELGKKEGATLVTGGKPFGNKGYYIEPTLFTNVTDEMTIAKEEIFGPVIMVLKFKTIEEVIRRANATTYGLAAGIMTKNIDIANTVTRSIRAGSVWVNCYLALDRDTPFGGYKMSGFGREQGLEALEHYLQVKTVTTPIYNSPWL.

NAD(+) contacts are provided by residues 164–166, 164–167, 190–193, 223–224, 243–244, 243–248, and 266–268; these read IPW, IPWN, KPAE, GS, GSTKVG, and ELG. Catalysis depends on glutamate 266, which acts as the Proton acceptor. The Nucleophile role is filled by cysteine 300. NAD(+) contacts are provided by residues 346 to 350 and 397 to 399; these read QQYEK and EIF.

The protein belongs to the aldehyde dehydrogenase family. Homotetramer. As to expression, expressed in flowers and disk florets.

The enzyme catalyses an aldehyde + NAD(+) + H2O = a carboxylate + NADH + 2 H(+). It carries out the reaction an aldehyde + NADP(+) + H2O = a carboxylate + NADPH + 2 H(+). It catalyses the reaction octanal + NADP(+) + H2O = octanoate + NADPH + 2 H(+). The catalysed reaction is (1R,3R)-chrysanthemal + NAD(+) + H2O = (1R,3R)-chrysanthemate + NADH + 2 H(+). The enzyme catalyses (1R,3R)-chrysanthemal + NADP(+) + H2O = (1R,3R)-chrysanthemate + NADPH + 2 H(+). It carries out the reaction (E)-hept-2-enal + NADP(+) + H2O = (E)-hept-2-enoate + NADPH + 2 H(+). It catalyses the reaction dodecanal + NADP(+) + H2O = dodecanoate + NADPH + 2 H(+). The catalysed reaction is citral + NADP(+) + H2O = 3,7-dimethylocta-2,6-dienoate + NADPH + 2 H(+). The enzyme catalyses perillyl aldehyde + NADP(+) + H2O = perillate + NADPH + 2 H(+). It carries out the reaction (2E,6E)-farnesal + NADP(+) + H2O = (2E,6E)-farnesoate + NADPH + 2 H(+). It catalyses the reaction (S)-(-)-citronellal + NADP(+) + H2O = (S)-(-)-citronellate + NADPH + 2 H(+). Its pathway is isoprenoid biosynthesis. Component of the monoterpenoid pyrethrins biosynthesis; pyrethrins are widely used plant-derived pesticide. Mediates the conversion of trans-chrysanthemal into trans-chrysanthemic acid. Can also use octanal, hept-2-enal, dodecanal, citral, farnesal, citronellal and perillyl aldehyde as substrates. This Tanacetum cinerariifolium (Dalmatian daisy) protein is Aldehyde dehydrogenase 1.